A 155-amino-acid polypeptide reads, in one-letter code: Endoribonuclease YbeY (155 aa).

Positions 120, 124, and 130 each coordinate Zn(2+).

This sequence belongs to the endoribonuclease YbeY family. Requires Zn(2+) as cofactor.

The protein resides in the cytoplasm. Single strand-specific metallo-endoribonuclease involved in late-stage 70S ribosome quality control and in maturation of the 3' terminus of the 16S rRNA. The polypeptide is Endoribonuclease YbeY (Staphylococcus aureus (strain bovine RF122 / ET3-1)).